The chain runs to 98 residues: DNA-binding protein Fis (98 aa).

A DNA-binding region (H-T-H motif) is located at residues Gln-74–Lys-93.

The protein belongs to the transcriptional regulatory Fis family. In terms of assembly, homodimer.

Its function is as follows. Activates ribosomal RNA transcription. Plays a direct role in upstream activation of rRNA promoters. This is DNA-binding protein Fis from Glaesserella parasuis serovar 5 (strain SH0165) (Haemophilus parasuis).